Consider the following 462-residue polypeptide: L-seryl-tRNA(Sec) selenium transferase (462 aa).

Lys-292 is subject to N6-(pyridoxal phosphate)lysine.

The protein belongs to the SelA family. Pyridoxal 5'-phosphate serves as cofactor.

It localises to the cytoplasm. It carries out the reaction L-seryl-tRNA(Sec) + selenophosphate + H(+) = L-selenocysteinyl-tRNA(Sec) + phosphate. It functions in the pathway aminoacyl-tRNA biosynthesis; selenocysteinyl-tRNA(Sec) biosynthesis; selenocysteinyl-tRNA(Sec) from L-seryl-tRNA(Sec) (bacterial route): step 1/1. Functionally, converts seryl-tRNA(Sec) to selenocysteinyl-tRNA(Sec) required for selenoprotein biosynthesis. The polypeptide is L-seryl-tRNA(Sec) selenium transferase (Geobacter sulfurreducens (strain ATCC 51573 / DSM 12127 / PCA)).